We begin with the raw amino-acid sequence, 141 residues long: Nucleoside diphosphate kinase (141 aa).

The ATP site is built by lysine 11, phenylalanine 59, arginine 87, threonine 93, arginine 104, and asparagine 114. Histidine 117 serves as the catalytic Pros-phosphohistidine intermediate.

It belongs to the NDK family. As to quaternary structure, homotetramer. Mg(2+) serves as cofactor.

It is found in the cytoplasm. It catalyses the reaction a 2'-deoxyribonucleoside 5'-diphosphate + ATP = a 2'-deoxyribonucleoside 5'-triphosphate + ADP. The enzyme catalyses a ribonucleoside 5'-diphosphate + ATP = a ribonucleoside 5'-triphosphate + ADP. Its function is as follows. Major role in the synthesis of nucleoside triphosphates other than ATP. The ATP gamma phosphate is transferred to the NDP beta phosphate via a ping-pong mechanism, using a phosphorylated active-site intermediate. This is Nucleoside diphosphate kinase from Haemophilus influenzae (strain ATCC 51907 / DSM 11121 / KW20 / Rd).